Here is a 285-residue protein sequence, read N- to C-terminus: Mediator of RNA polymerase II transcription subunit 4 (285 aa).

A compositionally biased stretch (low complexity) spans 1 to 13 (MSTPGPVPSSTSV). The tract at residues 1 to 25 (MSTPGPVPSSTSVATLPFSAQDKTQ) is disordered. The stretch at 31-115 (ELQSVGIYQD…TREILETLNT (85 aa)) forms a coiled coil. Residues 206 to 285 (DNVNNDNNTS…DLDLFNPDEF (80 aa)) are disordered. 2 stretches are compositionally biased toward basic and acidic residues: residues 216 to 250 (KIDE…RRGS) and 257 to 267 (GKEDSETKSEE). Acidic residues predominate over residues 268 to 285 (NPDLELDLDLDLFNPDEF).

Belongs to the Mediator complex subunit 4 family. In terms of assembly, component of the Mediator complex.

The protein localises to the nucleus. In terms of biological role, component of the Mediator complex, a coactivator involved in the regulated transcription of nearly all RNA polymerase II-dependent genes. Mediator functions as a bridge to convey information from gene-specific regulatory proteins to the basal RNA polymerase II transcription machinery. Mediator is recruited to promoters by direct interactions with regulatory proteins and serves as a scaffold for the assembly of a functional preinitiation complex with RNA polymerase II and the general transcription factors. The polypeptide is Mediator of RNA polymerase II transcription subunit 4 (MED4) (Kluyveromyces lactis (strain ATCC 8585 / CBS 2359 / DSM 70799 / NBRC 1267 / NRRL Y-1140 / WM37) (Yeast)).